The chain runs to 1889 residues: Protein TIC 214 (1889 aa).

6 consecutive transmembrane segments (helical) span residues 11-31 (LISL…YYGF), 67-87 (FIAG…HLAL), 88-108 (GKPH…FFWN), 127-147 (LSIQ…HFIL), 175-195 (VGWL…LVWI), and 224-244 (IFSI…PSPI). Acidic residues predominate over residues 255–265 (PEEVGESEEER). Disordered stretches follow at residues 255-303 (PEEV…PSKE) and 1610-1633 (SNQE…KKKQ). The segment covering 279–293 (NQKQGTEENTSSSLF) has biased composition (polar residues).

It belongs to the TIC214 family. As to quaternary structure, part of the Tic complex.

It is found in the plastid. It localises to the chloroplast inner membrane. Involved in protein precursor import into chloroplasts. May be part of an intermediate translocation complex acting as a protein-conducting channel at the inner envelope. This chain is Protein TIC 214, found in Gossypium barbadense (Sea Island cotton).